The chain runs to 498 residues: NAD(P)H-quinone oxidoreductase chain 4, chloroplastic (498 aa).

14 helical membrane passes run 4-24, 37-57, 80-100, 112-129, 134-154, 167-187, 208-228, 242-262, 272-292, 305-325, 330-350, 386-406, 416-436, and 463-483; these read FPWL…IVLF, YCIC…HFEL, FGID…TTLA, KLFY…LGTF, ILLF…LLSM, FILY…GMSL, ALEI…SPII, HYST…YGLV, AHSI…IYAA, IAYS…SISE, GAIL…FLAG, LALP…GIIT, ILIT…SLSI, and FISI…DFIF.

The protein belongs to the complex I subunit 4 family.

The protein localises to the plastid. Its subcellular location is the chloroplast thylakoid membrane. It carries out the reaction a plastoquinone + NADH + (n+1) H(+)(in) = a plastoquinol + NAD(+) + n H(+)(out). The catalysed reaction is a plastoquinone + NADPH + (n+1) H(+)(in) = a plastoquinol + NADP(+) + n H(+)(out). This Phaseolus vulgaris (Kidney bean) protein is NAD(P)H-quinone oxidoreductase chain 4, chloroplastic.